The chain runs to 270 residues: BPI fold-containing family A member 1 (270 aa).

A signal peptide spans 1 to 19 (MFLVGSLVVLCGLLAQSTA). The segment at 104–109 (LVGGLL) is important for surfactant activity and antibacterial properties. Asn174 carries an N-linked (GlcNAc...) asparagine glycan. Cys196 and Cys238 form a disulfide bridge.

This sequence belongs to the BPI/LBP/Plunc superfamily. Plunc family. As to quaternary structure, monomer. Interacts (via N-terminus) with SCNN1B, a subunit of the heterotrimeric epithelial sodium channel (ENaC); this inhibits proteolytic activation of ENaC. In terms of tissue distribution, detected in adult nasal epithelium, heart, lung, spleen, testis and salivary gland, and in embryonic nasal epithelium, lung, salivary gland and thymus.

The protein localises to the secreted. Its function is as follows. Lipid-binding protein which shows high specificity for the surfactant phospholipid dipalmitoylphosphatidylcholine (DPPC). Plays a role in the innate immune responses of the upper airways. Reduces the surface tension in secretions from airway epithelia and inhibits the formation of biofilm by pathogenic Gram-negative bacteria, such as P.aeruginosa and K.pneumoniae. Negatively regulates proteolytic cleavage of SCNN1G, an event that is required for activation of the epithelial sodium channel (ENaC), and thereby contributes to airway surface liquid homeostasis and proper clearance of mucus. Plays a role in the airway inflammatory response after exposure to irritants. May attract macrophages and neutrophils. This is BPI fold-containing family A member 1 (Bpifa1) from Rattus norvegicus (Rat).